We begin with the raw amino-acid sequence, 255 residues long: Syntaxin-6 (255 aa).

At serine 2 the chain carries N-acetylserine. A Phosphoserine modification is found at serine 2. The tract at residues 2 to 112 (SMEDPFFVVK…KDQMSASSVQ (111 aa)) is interaction with BLTP3B. A required for interaction with VPS51 region spans residues 2–168 (SMEDPFFVVK…QAQQQLIVEQ (167 aa)). Residues 2–234 (SMEDPFFVVK…VSHMTSDRRQ (233 aa)) are Cytoplasmic-facing. Positions 41–74 (EEIDWTTNELRNNLRSIEWDLEDLDETISIVEAN) form a coiled coil. Phosphoserine is present on residues serine 129 and serine 152. The t-SNARE coiled-coil homology domain occupies 163–225 (QLIVEQQDEQ…DNVMKKLAKV (63 aa)). The chain crosses the membrane as a helical; Anchor for type IV membrane protein span at residues 235–255 (WCAIAILFAVLLVVLTLFLVL).

This sequence belongs to the syntaxin family. As to quaternary structure, identified in a complex containing STX6, STX12, VAMP4 and VTI1A. Binds EEA1. Interacts with VPS45A and GOPC. Interacts with MARCHF2; the interaction promotes MARCHF2-mediated ubiquitination and degradation of CFTR. Interacts with MARCHF3. Interacts with BLTP3B (via C-terminal coiled-coil domain). Interacts with BAIAP3; this interaction is increased in the presence of calcium. Interacts (via N-terminus) with VPS51. Interacts with VPS13B. Widely expressed, with relatively higher expression in brain, lung and kidney.

The protein resides in the golgi apparatus membrane. It localises to the golgi apparatus. Its subcellular location is the trans-Golgi network membrane. The protein localises to the recycling endosome membrane. In terms of biological role, SNARE promoting movement of transport vesicles to target membranes. Targets endosomes to the trans-Golgi network, and may therefore function in retrograde trafficking. Together with SNARE STX12, promotes movement of vesicles from endosomes to the cell membrane, and may therefore function in the endocytic recycling pathway. In Rattus norvegicus (Rat), this protein is Syntaxin-6 (Stx6).